A 129-amino-acid chain; its full sequence is Small ribosomal subunit protein uS11 (129 aa).

Belongs to the universal ribosomal protein uS11 family. In terms of assembly, part of the 30S ribosomal subunit. Interacts with proteins S7 and S18. Binds to IF-3.

Functionally, located on the platform of the 30S subunit, it bridges several disparate RNA helices of the 16S rRNA. Forms part of the Shine-Dalgarno cleft in the 70S ribosome. In Macrococcus caseolyticus (strain JCSC5402) (Macrococcoides caseolyticum), this protein is Small ribosomal subunit protein uS11.